The chain runs to 353 residues: Cyanuric acid amidohydrolase (353 aa).

The tract at residues 1–90 is RU A; it reads MSSTALYTVP…NIFVRDERQY (90 aa). Substrate is bound by residues arginine 49 and 69 to 70; that span reads SG. Residues 96–231 are RU B; it reads GLVTAVGRTR…CHILVVAESD (136 aa). Residue lysine 145 is part of the active site. Residues arginine 177 and 214 to 215 each bind substrate; that span reads SS. Serine 214 serves as the catalytic Nucleophile. Positions 237–353 are RU C; that stretch reads LRAAHTAMRD…TANATGEASR (117 aa). Glutamate 275 provides a ligand contact to Mg(2+). Residues arginine 302 and 321 to 322 each bind substrate; that span reads SG. Mg(2+) is bound by residues alanine 324, glutamine 327, glycine 328, proline 329, and glycine 332.

It belongs to the cyclic amide hydrolase (CyAH) family. In terms of assembly, homotetramer.

It catalyses the reaction cyanurate + H2O = 1-carboxybiuret + H(+). Its pathway is xenobiotic degradation; atrazine degradation; biuret from cyanurate: step 1/1. With respect to regulation, inhibited by barbituric acid. Responsible for the hydrolysis of cyanuric acid, an intermediate formed during catabolism of s-triazine based compounds in herbicides such as atrazine and polymers such as melamine. Catalyzes the hydrolytic opening of the s-triazine ring of cyanuric acid (2,4,6-trihydroxy-s-triazine) to yield carbon dioxide and carboxybiuret, which spontaneously decarboxylates to biuret. Required for growth on melamine or cyanuric acid as sole nitrogen source. This is Cyanuric acid amidohydrolase from Rhodococcus sp.